Reading from the N-terminus, the 1297-residue chain is Phosphoribosylformylglycinamidine synthase (1297 aa).

ATP-binding positions include Gly-307–Asp-318 and Ala-678. Mg(2+) contacts are provided by Glu-718, Asn-722, and Asp-886. The Glutamine amidotransferase type-1 domain maps to Met-1044 to Gly-1297. The active-site Nucleophile is Cys-1137. Residues His-1262 and Glu-1264 contribute to the active site.

This sequence in the N-terminal section; belongs to the FGAMS family. As to quaternary structure, monomer.

The protein localises to the cytoplasm. It carries out the reaction N(2)-formyl-N(1)-(5-phospho-beta-D-ribosyl)glycinamide + L-glutamine + ATP + H2O = 2-formamido-N(1)-(5-O-phospho-beta-D-ribosyl)acetamidine + L-glutamate + ADP + phosphate + H(+). It participates in purine metabolism; IMP biosynthesis via de novo pathway; 5-amino-1-(5-phospho-D-ribosyl)imidazole from N(2)-formyl-N(1)-(5-phospho-D-ribosyl)glycinamide: step 1/2. Phosphoribosylformylglycinamidine synthase involved in the purines biosynthetic pathway. Catalyzes the ATP-dependent conversion of formylglycinamide ribonucleotide (FGAR) and glutamine to yield formylglycinamidine ribonucleotide (FGAM) and glutamate. This Vibrio vulnificus (strain CMCP6) protein is Phosphoribosylformylglycinamidine synthase.